Reading from the N-terminus, the 106-residue chain is Cytochrome c oxidase assembly factor 3 homolog, mitochondrial (106 aa).

The tract at residues 1 to 28 (MASSGSGDPLDSKRGEAPFAQRIDPTRE) is disordered. Ala2 bears the N-acetylalanine mark. Over 2 to 57 (ASSGSGDPLDSKRGEAPFAQRIDPTREKLTPEQLHFMRQAQLAQWQKVLPRRRTRN) the chain is Mitochondrial matrix. A helical transmembrane segment spans residues 58–80 (IVTGLGIGALVLAIHGYTFYSIS). A coiled-coil region spans residues 78-104 (SISQERFLDELEDEAKAARARALARAS). Over 81 to 106 (QERFLDELEDEAKAARARALARASGS) the chain is Mitochondrial intermembrane.

It belongs to the COA3 family. As to quaternary structure, along with COX14, core component of the MITRAC (mitochondrial translation regulation assembly intermediate of cytochrome c oxidase complex) complex. Interacts with MT-CO1/COX1, SMIM20, SURF1 and TIMM21.

The protein localises to the mitochondrion inner membrane. Functionally, core component of the MITRAC (mitochondrial translation regulation assembly intermediate of cytochrome c oxidase complex) complex, that regulates cytochrome c oxidase assembly. MITRAC complexes regulate both translation of mitochondrial encoded components and assembly of nuclear-encoded components imported in mitochondrion. Required for efficient translation of MT-CO1 and mitochondrial respiratory chain complex IV assembly. This chain is Cytochrome c oxidase assembly factor 3 homolog, mitochondrial (COA3), found in Pongo abelii (Sumatran orangutan).